The primary structure comprises 749 residues: Ensconsin (749 aa).

Disordered regions lie at residues 1–91 (MAEL…WLER) and 104–180 (EERK…PDRR). Ala2 carries the post-translational modification N-acetylalanine. A compositionally biased stretch (polar residues) spans 36–52 (SSRPASAISGQNNNHSG). Composition is skewed to basic and acidic residues over residues 62–91 (RVDD…WLER) and 104–151 (EERK…ERSQ). Residues 89–152 (LEREERARQH…VRRTMERSQK (64 aa)) are a coiled coil. Residues Ser161, Ser165, Ser183, Ser200, Ser202, Ser209, and Ser219 each carry the phosphoserine modification. At Thr231 the chain carries Phosphothreonine. Phosphoserine occurs at positions 235 and 254. A Glycyl lysine isopeptide (Lys-Gly) (interchain with G-Cter in SUMO2) cross-link involves residue Lys273. Thr277 carries the post-translational modification Phosphothreonine. Ser282 is modified (phosphoserine). A Glycyl lysine isopeptide (Lys-Gly) (interchain with G-Cter in SUMO2) cross-link involves residue Lys295. Residues 307–320 (TSGTRRAVSPSNPK) are compositionally biased toward polar residues. Disordered regions lie at residues 307-688 (TSGT…VSVQ) and 702-723 (SKPS…NPIL). Residues Ser335 and Ser365 each carry the phosphoserine modification. Basic and acidic residues-rich tracts occupy residues 372–390 (VKRE…KEPQ) and 406–418 (KVEE…RTPA). Residues Lys373, Lys377, and Lys406 each participate in a glycyl lysine isopeptide (Lys-Gly) (interchain with G-Cter in SUMO2) cross-link. Positions 424 to 433 (PAAPAMAPAP) are enriched in low complexity. A compositionally biased stretch (pro residues) spans 434–450 (ASAPAPASAPAPAPVPT). Residues 451-460 (PAMVSAPSST) are compositionally biased toward low complexity. Residues 461–473 (VNASASVKTSAGT) show a composition bias toward polar residues. Positions 477-612 (EEATRLLAEK…LEEIMKRTRR (136 aa)) form a coiled coil. The segment covering 478–627 (EATRLLAEKR…KKTSDQRNGD (150 aa)) has biased composition (basic and acidic residues). Over residues 660–672 (VVTSHQSKVTVES) the composition is skewed to polar residues. Thr673 bears the Phosphothreonine mark.

Belongs to the MAP7 family. Interacts with TRPV4. The association with microtubules is regulated by phosphorylation during the cell cycle. During interphase only phosphorylated on serine. Phosphorylated on threonine in mitosis. In terms of tissue distribution, expressed in the skin and cells of epithelial origin. Predominantly expressed in the suprabasal layers of the normal epidermis and relatively abundant in squamous cell carcinomas but barely detectable in basal cell carcinomas.

It is found in the cytoplasm. The protein resides in the perinuclear region. It localises to the basolateral cell membrane. Its subcellular location is the cytoskeleton. Microtubule-stabilizing protein that may play an important role during reorganization of microtubules during polarization and differentiation of epithelial cells. Associates with microtubules in a dynamic manner. May play a role in the formation of intercellular contacts. Colocalization with TRPV4 results in the redistribution of TRPV4 toward the membrane and may link cytoskeletal microfilaments. The polypeptide is Ensconsin (MAP7) (Homo sapiens (Human)).